We begin with the raw amino-acid sequence, 525 residues long: Ribosomal protein S6 kinase beta-1 (525 aa).

The TOS motif signature appears at 28–32; the sequence is FDIDL. A compositionally biased stretch (acidic residues) spans 32–46; sequence LDQPEDAGSEDELEE. The interval 32–54 is disordered; the sequence is LDQPEDAGSEDELEEGGQLNESM. Residues 91 to 352 form the Protein kinase domain; the sequence is FELLRVLGKG…AGEVQAHPFF (262 aa). ATP-binding positions include 97–105 and K123; that span reads LGKGGYGKV. Residue D218 is the Proton acceptor of the active site. Phosphothreonine; by PDPK1 is present on T252. Residues 353-423 enclose the AGC-kinase C-terminal domain; the sequence is RHINWEELLA…VAPSVLESVK (71 aa). The segment at 380–399 is disordered; it reads SQFDSKFTRQTPVDSPDDST. Over residues 381-399 the composition is skewed to polar residues; that stretch reads QFDSKFTRQTPVDSPDDST. S394 carries the phosphoserine modification. T412 carries the phosphothreonine; by MTOR, NEK6 and NEK7 modification. The autoinhibitory domain stretch occupies residues 424–525; sequence EKFSFEPKIR…KRPEHLRMNL (102 aa). S434 and S441 each carry phosphoserine. T444 is modified (phosphothreonine). S447 and S452 each carry phosphoserine. N6-acetyllysine is present on K516.

Belongs to the protein kinase superfamily. AGC Ser/Thr protein kinase family. S6 kinase subfamily. Interacts with PPP1R9A/neurabin-1. Interacts with RPTOR. Interacts with IRS1. Interacts with EIF3B and EIF3C. Interacts with TRAF4. Interacts with POLDIP3. Interacts (via N-terminus) with IER5. Phosphorylation at Thr-412 is regulated by mTORC1. The phosphorylation at this site is maintained by an agonist-dependent autophosphorylation mechanism. Activated by phosphorylation at Thr-252 by PDPK1. Dephosphorylation by PPP1CC at Thr-412 in mitochondrion.

It localises to the cytoplasm. The protein resides in the synapse. The protein localises to the synaptosome. Its subcellular location is the mitochondrion outer membrane. It is found in the mitochondrion. It catalyses the reaction L-seryl-[protein] + ATP = O-phospho-L-seryl-[protein] + ADP + H(+). The enzyme catalyses L-threonyl-[protein] + ATP = O-phospho-L-threonyl-[protein] + ADP + H(+). Its activity is regulated as follows. Activation requires multiple phosphorylation events on serine/threonine residues. Activation appears to be first mediated by phosphorylation of multiple sites in the autoinhibitory domain, which facilitates phosphorylation at Thr-412, disrupting the autoinhibitory mechanism and allowing phosphorylation of Thr-252 by PDPK1. The active conformation of the kinase is believed to be stabilized by a mechanism involving three conserved phosphorylation sites located in the kinase domain activation loop (Thr-252) and in the AGC-kinase C-terminal domain (Ser-394 in the middle of the tail/linker region and Thr-412 within a hydrophobic motif at its end). Activated by mTORC1; isoform Alpha I and isoform Alpha II are sensitive to rapamycin, which inhibits activating phosphorylation at Thr-412. Activated by PDPK1. Serine/threonine-protein kinase that acts downstream of mTOR signaling in response to growth factors and nutrients to promote cell proliferation, cell growth and cell cycle progression. Regulates protein synthesis through phosphorylation of EIF4B, RPS6 and EEF2K, and contributes to cell survival by repressing the pro-apoptotic function of BAD. Under conditions of nutrient depletion, the inactive form associates with the EIF3 translation initiation complex. Upon mitogenic stimulation, phosphorylation by the mechanistic target of rapamycin complex 1 (mTORC1) leads to dissociation from the EIF3 complex and activation. The active form then phosphorylates and activates several substrates in the pre-initiation complex, including the EIF2B complex and the cap-binding complex component EIF4B. Also controls translation initiation by phosphorylating a negative regulator of EIF4A, PDCD4, targeting it for ubiquitination and subsequent proteolysis. Promotes initiation of the pioneer round of protein synthesis by phosphorylating POLDIP3/SKAR. In response to IGF1, activates translation elongation by phosphorylating EEF2 kinase (EEF2K), which leads to its inhibition and thus activation of EEF2. Also plays a role in feedback regulation of mTORC2 by mTORC1 by phosphorylating MAPKAP1/SIN1, MTOR and RICTOR, resulting in the inhibition of mTORC2 and AKT1 signaling. Also involved in feedback regulation of mTORC1 and mTORC2 by phosphorylating DEPTOR. Mediates cell survival by phosphorylating the pro-apoptotic protein BAD and suppressing its pro-apoptotic function. Phosphorylates mitochondrial URI1 leading to dissociation of a URI1-PPP1CC complex. The free mitochondrial PPP1CC can then dephosphorylate RPS6KB1 at Thr-412, which is proposed to be a negative feedback mechanism for the RPS6KB1 anti-apoptotic function. Mediates TNF-alpha-induced insulin resistance by phosphorylating IRS1 at multiple serine residues, resulting in accelerated degradation of IRS1. In cells lacking functional TSC1-2 complex, constitutively phosphorylates and inhibits GSK3B. May be involved in cytoskeletal rearrangement through binding to neurabin. Phosphorylates and activates the pyrimidine biosynthesis enzyme CAD, downstream of MTOR. Following activation by mTORC1, phosphorylates EPRS and thereby plays a key role in fatty acid uptake by adipocytes and also most probably in interferon-gamma-induced translation inhibition. The protein is Ribosomal protein S6 kinase beta-1 (Rps6kb1) of Mus musculus (Mouse).